The following is a 764-amino-acid chain: Protein Lines homolog 1 (764 aa).

Disordered regions lie at residues Ser615–Cys668 and Trp682–Phe702. Over residues Asp645 to Thr654 the composition is skewed to acidic residues. Ser650 bears the Phosphoserine mark. A compositionally biased stretch (polar residues) spans His658–Cys668. The segment covering Glu691–Phe702 has biased composition (low complexity).

This sequence belongs to the protein lines family.

This Mus musculus (Mouse) protein is Protein Lines homolog 1.